The following is a 166-amino-acid chain: UPF0251 protein UNCMA_27150 (166 aa).

Belongs to the UPF0251 family.

This Methanocella arvoryzae (strain DSM 22066 / NBRC 105507 / MRE50) protein is UPF0251 protein UNCMA_27150.